The following is a 343-amino-acid chain: MKKKVAILFGGQSTEHEVSRVSASSVLKNIDLSKYDVYPIGITKDGKWFEYTGAIDKIESGEWEKDEFYKNPNGQEILFNREVDVVFPVMHGLYGEDGTIQGLCKLLTIPCVGPGVMSSAVCMDKVYTKYVLENFGVKQADYVVVNAHDYKNNKMDIISTIENKLGYDVFIKPSNSGSSVGISKAHNREELEAGLEEALKFDRKVLVEVALNAREIEVAVLGNDEPVAATPGEIVPANEFYDYEAKYSNAQSKLLLPANLSPEKLEKVKELAVRIFKMLDCAGMSRVDFLVDKETEEVYLNEINTIPGFTKISMYPKMWQAEGKAYGELISEIIELAVERDNK.

The ATP-grasp domain occupies 129-335; it reads KYVLENFGVK…YGELISEIIE (207 aa). Position 162 to 217 (162 to 217) interacts with ATP; sequence ENKLGYDVFIKPSNSGSSVGISKAHNREELEAGLEEALKFDRKVLVEVALNAREIE. 3 residues coordinate Mg(2+): aspartate 288, glutamate 302, and asparagine 304.

It belongs to the D-alanine--D-alanine ligase family. Mg(2+) is required as a cofactor. Mn(2+) serves as cofactor.

Its subcellular location is the cytoplasm. The catalysed reaction is 2 D-alanine + ATP = D-alanyl-D-alanine + ADP + phosphate + H(+). The protein operates within cell wall biogenesis; peptidoglycan biosynthesis. Cell wall formation. In Clostridium novyi (strain NT), this protein is D-alanine--D-alanine ligase.